We begin with the raw amino-acid sequence, 283 residues long: Nudix hydrolase 6 (283 aa).

The 133-residue stretch at 101-233 folds into the Nudix hydrolase domain; sequence SHRIGVGAFV…KKELFRFMAN (133 aa). The Nudix box motif lies at 139–160; the sequence is GVVKEGENIWEGALREVEEETG. The a divalent metal cation site is built by glutamate 154, glutamate 158, and glutamate 204.

The protein belongs to the Nudix hydrolase family. The cofactor is Mg(2+). It depends on Mn(2+) as a cofactor. Expressed in stems and leaves. Weakly or not expressed in roots.

It carries out the reaction ADP-D-ribose + H2O = D-ribose 5-phosphate + AMP + 2 H(+). The catalysed reaction is NAD(+) + H2O = beta-nicotinamide D-ribonucleotide + AMP + 2 H(+). The enzyme catalyses NADH + H2O = reduced beta-nicotinamide D-ribonucleotide + AMP + 2 H(+). Functionally, probably mediates the hydrolysis of some nucleoside diphosphate derivatives. In vitro, it can use both NADH and ADP-ribose as substrates; however the relevance of such substrates in vivo is unclear. The sequence is that of Nudix hydrolase 6 from Arabidopsis thaliana (Mouse-ear cress).